Consider the following 251-residue polypeptide: Ribosomal RNA small subunit methyltransferase J (251 aa).

Residues 100–101, 116–117, and D170 contribute to the S-adenosyl-L-methionine site; these read RD and ER.

This sequence belongs to the methyltransferase superfamily. RsmJ family.

The protein resides in the cytoplasm. The catalysed reaction is guanosine(1516) in 16S rRNA + S-adenosyl-L-methionine = N(2)-methylguanosine(1516) in 16S rRNA + S-adenosyl-L-homocysteine + H(+). In terms of biological role, specifically methylates the guanosine in position 1516 of 16S rRNA. The sequence is that of Ribosomal RNA small subunit methyltransferase J from Actinobacillus pleuropneumoniae serotype 3 (strain JL03).